The sequence spans 329 residues: Probable fructokinase-2 (329 aa).

This sequence belongs to the carbohydrate kinase PfkB family.

The enzyme catalyses D-fructose + ATP = D-fructose 6-phosphate + ADP + H(+). It functions in the pathway glycan biosynthesis; starch biosynthesis. Functionally, may play an important role in maintaining the flux of carbon towards starch formation. This is Probable fructokinase-2 from Arabidopsis thaliana (Mouse-ear cress).